Reading from the N-terminus, the 646-residue chain is Threonine--tRNA ligase (646 aa).

A TGS domain is found at 1-63 (MAQISLTFPD…ETDAKIAIHT (63 aa)). A catalytic region spans residues 247–544 (DHRKLGREME…LIENYAGKLP (298 aa)). Residues cysteine 344, histidine 395, and histidine 521 each contribute to the Zn(2+) site.

Belongs to the class-II aminoacyl-tRNA synthetase family. As to quaternary structure, homodimer. Zn(2+) serves as cofactor.

The protein resides in the cytoplasm. It carries out the reaction tRNA(Thr) + L-threonine + ATP = L-threonyl-tRNA(Thr) + AMP + diphosphate + H(+). Its function is as follows. Catalyzes the attachment of threonine to tRNA(Thr) in a two-step reaction: L-threonine is first activated by ATP to form Thr-AMP and then transferred to the acceptor end of tRNA(Thr). Also edits incorrectly charged L-seryl-tRNA(Thr). The sequence is that of Threonine--tRNA ligase from Cereibacter sphaeroides (strain ATCC 17023 / DSM 158 / JCM 6121 / CCUG 31486 / LMG 2827 / NBRC 12203 / NCIMB 8253 / ATH 2.4.1.) (Rhodobacter sphaeroides).